The following is a 156-amino-acid chain: Ribosomal RNA large subunit methyltransferase H (156 aa).

S-adenosyl-L-methionine contacts are provided by residues Gly104 and 123 to 128; that span reads LSALTL.

This sequence belongs to the RNA methyltransferase RlmH family. In terms of assembly, homodimer.

Its subcellular location is the cytoplasm. The enzyme catalyses pseudouridine(1915) in 23S rRNA + S-adenosyl-L-methionine = N(3)-methylpseudouridine(1915) in 23S rRNA + S-adenosyl-L-homocysteine + H(+). Functionally, specifically methylates the pseudouridine at position 1915 (m3Psi1915) in 23S rRNA. The polypeptide is Ribosomal RNA large subunit methyltransferase H (Nitrosospira multiformis (strain ATCC 25196 / NCIMB 11849 / C 71)).